Reading from the N-terminus, the 190-residue chain is dCTP deaminase (190 aa).

113-118 is a dCTP binding site; that stretch reads KSTYAR. Glu-139 functions as the Proton donor/acceptor in the catalytic mechanism. DCTP contacts are provided by Gln-158, Tyr-172, Lys-181, and Gln-182.

The protein belongs to the dCTP deaminase family. As to quaternary structure, homotrimer.

The catalysed reaction is dCTP + H2O + H(+) = dUTP + NH4(+). The protein operates within pyrimidine metabolism; dUMP biosynthesis; dUMP from dCTP (dUTP route): step 1/2. Its function is as follows. Catalyzes the deamination of dCTP to dUTP. The chain is dCTP deaminase from Chlamydia pneumoniae (Chlamydophila pneumoniae).